Here is a 495-residue protein sequence, read N- to C-terminus: Maternal protein exuperantia-1 (495 aa).

Disordered regions lie at residues 197 to 217 and 377 to 495; these read DESANKENEPENVNRNGSSND and TIKP…AATN. 2 stretches are compositionally biased toward polar residues: residues 207 to 216 and 398 to 414; these read ENVNRNGSSN and AASSKNGAMSSRSTSTE.

Its function is as follows. Ensures the proper localization of the mRNA of the bicoid gene to the anterior regions of the oocyte thus playing a fundamental role in the establishment of the polarity of the oocyte. May bind the bcd mRNA. The sequence is that of Maternal protein exuperantia-1 (exu1) from Drosophila pseudoobscura pseudoobscura (Fruit fly).